The sequence spans 259 residues: Phosphate import ATP-binding protein PstB (259 aa).

Positions 5-248 constitute an ABC transporter domain; that stretch reads IDVSGLHVYY…NKIFTKPEKK (244 aa). 37 to 44 contacts ATP; it reads GSSGCGKS.

It belongs to the ABC transporter superfamily. Phosphate importer (TC 3.A.1.7) family. The complex is composed of two ATP-binding proteins (PstB), two transmembrane proteins (PstC and PstA) and a solute-binding protein (PstS).

Its subcellular location is the cell membrane. The catalysed reaction is phosphate(out) + ATP + H2O = ADP + 2 phosphate(in) + H(+). Its function is as follows. Part of the ABC transporter complex PstSACB involved in phosphate import. Responsible for energy coupling to the transport system. The protein is Phosphate import ATP-binding protein PstB of Thermobifida fusca (strain YX).